The sequence spans 768 residues: Cullin-3-A (768 aa).

The disordered stretch occupies residues 677–698 (VAAKQGESDPERKETRQKVDDD). A compositionally biased stretch (basic and acidic residues) spans 682–698 (GESDPERKETRQKVDDD). Positions 698-760 (DRKHEIEAAI…REYLARTPED (63 aa)) constitute a Cullin neddylation domain. Lys-712 participates in a covalent cross-link: Glycyl lysine isopeptide (Lys-Gly) (interchain with G-Cter in NEDD8).

The protein belongs to the cullin family. In terms of assembly, component of multiple BCR (BTB-CUL3-RBX1) E3 ubiquitin-protein ligase complexes formed of cul3, rbx1 and a variable BTB domain-containing protein acting as both, adapter to cullin and substrate recognition subunit. Interacts with btbd6. In terms of processing, neddylated. Attachment of NEDD8 is required for the E3 ubiquitin-protein ligase activity of the SCF-like complex.

It is found in the nucleus. The protein operates within protein modification; protein ubiquitination. In terms of biological role, probable core component of cullin-based SCF-like E3 ubiquitin-protein ligase complexes which mediate the ubiquitination and subsequent proteasomal degradation of target proteins. The E3 ubiquitin-protein ligase activity of the complex is dependent on the neddylation of the cullin subunit. Involved in ER-Golgi transport by regulating the size of COPII coats, thereby playing a key role in collagen export, which is required for embryonic stem (ES) cells division. May play a role in the regulation of mittotic entry via ubiquitination of aurka. This chain is Cullin-3-A (cul3a), found in Xenopus laevis (African clawed frog).